A 313-amino-acid chain; its full sequence is D-alanine--D-alanine ligase (313 aa).

Positions 108–308 (KLVWQQTGVP…YSELVVKVLS (201 aa)) constitute an ATP-grasp domain. 138–193 (VAKLGLPLFVKPASEGSSVAVLKVKTADALPAALEEAATHDKIVIVEKSIEGGGEY) contributes to the ATP binding site. Residues aspartate 262, glutamate 275, and asparagine 277 each coordinate Mg(2+).

The protein belongs to the D-alanine--D-alanine ligase family. Mg(2+) serves as cofactor. It depends on Mn(2+) as a cofactor.

The protein localises to the cytoplasm. It carries out the reaction 2 D-alanine + ATP = D-alanyl-D-alanine + ADP + phosphate + H(+). It functions in the pathway cell wall biogenesis; peptidoglycan biosynthesis. In terms of biological role, cell wall formation. The protein is D-alanine--D-alanine ligase of Burkholderia cenocepacia (strain ATCC BAA-245 / DSM 16553 / LMG 16656 / NCTC 13227 / J2315 / CF5610) (Burkholderia cepacia (strain J2315)).